The following is a 111-amino-acid chain: UPF0060 membrane protein Pden_1837 (111 aa).

Helical transmembrane passes span 7-27 (IAVY…FWAW), 30-50 (LGKS…FAWL), 62-82 (AYAA…WLTE), and 91-111 (ILGG…PRAA).

Belongs to the UPF0060 family.

The protein localises to the cell inner membrane. This Paracoccus denitrificans (strain Pd 1222) protein is UPF0060 membrane protein Pden_1837.